A 624-amino-acid chain; its full sequence is MNPELPPNHLDKPVDDAYDHTLGPADAEITLVEYGSYADAPSRSAHERVAELRSRFGNRMRYVFRHRPLAGSKIARRAAELVESHNNSGRFWDLHVALMSRSDKLSADDLCTIISDLKLEGNKEAGQEETAERARDRVEADIASANASGVIVTPTFFINGRRYDGPWDVRSLSEAMLGSLGHVVHAAALDFAKWAPSTGIMLLLATALAVVLSNSALGPDFNEMWEQRLGITFQHSAFELSLRHWINDGLLVIFFLVVGLEIKREFTVGHLAERQSAMLPIAAAIGGMAVPALLYLILVPPGPPMAPGSDGTDGAWSYGWGVPMATDTAFAIALIAMMGKRVPVELRVFLTAAAIVDDIGAIIVVAIFYSGELHIAYLGSAVAIAGLLALLNKGGVYRASPYVILGIVLWVFVYASGIHATLAGIILALFIPTRPPPNLRALMLQADAILTAETRRGREVMHYGPSEPALEALDAIHDRLESPAARMLRHLAPRSSFLVLPVFALANAGVVVETSVFGEHIPLMLGTATALVIGKPLGFITATVTAVRLGFATKPDAYSWRQLGGAGALAGIGFTMSLFIASQAFPEVSDYAAAKIAIFGGSILSAIIGVAILWNAQAEEEKNP.

The tract at residues 1 to 164 (MNPELPPNHL…TFFINGRRYD (164 aa)) is unknown. The segment at 165–624 (GPWDVRSLSE…NAQAEEEKNP (460 aa)) is na(+)/H(+) antiporter NhaA. The next 11 helical transmembrane spans lie at 199–219 (GIML…ALGP), 240–260 (LSLR…VVGL), 279–299 (LPIA…LILV), 319–339 (GWGV…AMMG), 348–368 (VFLT…VAIF), 371–391 (GELH…LALL), 407–427 (IVLW…GIIL), 497–517 (FLVL…TSVF), 521–541 (IPLM…GFIT), 565–585 (GAGA…SQAF), and 596–616 (IAIF…LWNA).

Belongs to the NhaA Na(+)/H(+) (TC 2.A.33) antiporter family.

The protein resides in the cell inner membrane. It carries out the reaction Na(+)(in) + 2 H(+)(out) = Na(+)(out) + 2 H(+)(in). Functionally, na(+)/H(+) antiporter that extrudes sodium in exchange for external protons. The polypeptide is Na(+)/H(+) antiporter NhaA (Nitrosospira multiformis (strain ATCC 25196 / NCIMB 11849 / C 71)).